A 664-amino-acid polypeptide reads, in one-letter code: Protein SIEVE ELEMENT OCCLUSION C (664 aa).

The sequence is that of Protein SIEVE ELEMENT OCCLUSION C from Arabidopsis thaliana (Mouse-ear cress).